Consider the following 640-residue polypeptide: Ribonuclease J (640 aa).

Zn(2+)-binding residues include histidine 75, histidine 77, aspartate 79, histidine 80, histidine 145, and aspartate 167. 368–372 (HVSGH) contributes to the substrate binding site. Histidine 394 provides a ligand contact to Zn(2+). Residues 578–640 (TVSATSATPA…RKRSTTSVSS (63 aa)) are disordered. The segment covering 598 to 610 (PEPKVKAKPEKKV) has biased composition (basic and acidic residues).

This sequence belongs to the metallo-beta-lactamase superfamily. RNA-metabolizing metallo-beta-lactamase-like family. Bacterial RNase J subfamily. Homodimer, may be a subunit of the RNA degradosome. Zn(2+) is required as a cofactor.

It is found in the cytoplasm. Its function is as follows. An RNase that has 5'-3' exonuclease and possibly endoonuclease activity. Involved in maturation of rRNA and in some organisms also mRNA maturation and/or decay. The chain is Ribonuclease J from Synechocystis sp. (strain ATCC 27184 / PCC 6803 / Kazusa).